Consider the following 453-residue polypeptide: Phenylalanine-4-hydroxylase (453 aa).

A2 carries the N-acetylalanine modification. S16 is subject to Phosphoserine. The ACT domain occupies 36–114 (SLIFSLKEEV…TVHELSRDKE (79 aa)). H285, H290, and E330 together coordinate Fe cation.

The protein belongs to the biopterin-dependent aromatic amino acid hydroxylase family. In terms of assembly, homodimer and homotetramer. It depends on Fe(2+) as a cofactor. In terms of processing, phosphorylation at Ser-16 increases basal activity and facilitates activation by the substrate phenylalanine.

The catalysed reaction is (6R)-L-erythro-5,6,7,8-tetrahydrobiopterin + L-phenylalanine + O2 = (4aS,6R)-4a-hydroxy-L-erythro-5,6,7,8-tetrahydrobiopterin + L-tyrosine. Its pathway is amino-acid degradation; L-phenylalanine degradation; acetoacetate and fumarate from L-phenylalanine: step 1/6. With respect to regulation, N-terminal region of PAH is thought to contain allosteric binding sites for phenylalanine and to constitute an 'inhibitory' domain that regulates the activity of a catalytic domain in the C-terminal portion of the molecule. Its function is as follows. Catalyzes the hydroxylation of L-phenylalanine to L-tyrosine. In Mus musculus (Mouse), this protein is Phenylalanine-4-hydroxylase (Pah).